The sequence spans 315 residues: Putative heme-binding peroxidase (315 aa).

His-40 functions as the Proton acceptor in the catalytic mechanism. His-169 contacts heme b. Residue Trp-185 is the Tryptophan radical intermediate of the active site. The interval 267-286 (EEGKPLDKTAPPAGDETCPV) is disordered.

This sequence belongs to the peroxidase family. Cytochrome c peroxidase subfamily. Requires heme b as cofactor.

Destroys radicals which are normally produced within the cells and which are toxic to biological systems. The sequence is that of Putative heme-binding peroxidase from Cryptococcus neoformans var. neoformans serotype D (strain B-3501A) (Filobasidiella neoformans).